Here is a 90-residue protein sequence, read N- to C-terminus: Protein S100-A6 (90 aa).

EF-hand domains follow at residues 12–47 (LVAIFHKYSGREGDKHTLSKKELKELIQKELTIGSK) and 48–83 (LQDAEIARLMEDLDRNKDQEVNFQEYVTFLGALALI). Residues threonine 28 and glutamate 33 each contribute to the Ca(2+) site. Position 40 is an N6-acetyllysine (lysine 40). Serine 46 carries the post-translational modification Phosphoserine. Lysine 47 bears the N6-acetyllysine; alternate mark. Lysine 47 is modified (N6-succinyllysine; alternate). Residues aspartate 61, asparagine 63, aspartate 65, glutamate 67, and glutamate 72 each contribute to the Ca(2+) site.

Belongs to the S-100 family. Homodimer; head to tail assembly of 2 subunits. Interacts with CACYBP in a calcium-dependent manner. Interacts with ANXA2 and ANXA11 (via N-terminus). Interacts with SUGT1. Interacts with TP53; has higher affinity for TP53 that is phosphorylated on its N-terminal domain, and lower affinity for TP53 that is phosphorylated on its C-terminal domain. Interacts with tropomyosin. Interacts with FKBP4. Interacts with PPP5C (via TPR repeats); the interaction is calcium-dependent and modulates PPP5C activity. Interacts with TPPP; this interaction inhibits TPPP dimerization. The N-terminus is blocked.

The protein localises to the nucleus envelope. The protein resides in the cytoplasm. It localises to the cell membrane. Functionally, may function as calcium sensor and modulator, contributing to cellular calcium signaling. May function by interacting with other proteins, such as TPR-containing proteins, and indirectly play a role in many physiological processes such as the reorganization of the actin cytoskeleton and in cell motility. Binds 2 calcium ions. Calcium binding is cooperative. The protein is Protein S100-A6 (S100A6) of Homo sapiens (Human).